Consider the following 185-residue polypeptide: MVLAKDLKSGMTFLNGEKLLRVMEASHHKPGKGNTIMRMKLKDVRSGSTFDDTYRPEDKFEQAVIETVTAQYLYSMDDIANFMNNETYEQYEIPVEQVKDELLYVLENTDVKIQFYGTEVIGIQLPTTVVLEVTETQPSIKGATVTGSGKPATMETGLVVNVPDFVEVGTKLEINTQTGEYLKRA.

Belongs to the elongation factor P family.

The protein localises to the cytoplasm. The protein operates within protein biosynthesis; polypeptide chain elongation. Involved in peptide bond synthesis. Stimulates efficient translation and peptide-bond synthesis on native or reconstituted 70S ribosomes in vitro. Probably functions indirectly by altering the affinity of the ribosome for aminoacyl-tRNA, thus increasing their reactivity as acceptors for peptidyl transferase. The chain is Elongation factor P from Lactococcus lactis subsp. cremoris (strain MG1363).